Here is a 41-residue protein sequence, read N- to C-terminus: Ranatuerin-2PLg (41 aa).

Positions 1 to 11 are excised as a propeptide; it reads DDGVEMTEEEV. Residues C36 and C41 are joined by a disulfide bond.

The protein belongs to the frog skin active peptide (FSAP) family. Ranatuerin subfamily.

The protein localises to the secreted. Antimicrobial peptide. This chain is Ranatuerin-2PLg, found in Lithobates palustris (Pickerel frog).